The following is a 121-amino-acid chain: MARIAGVDIPREKRIVISLTYIYGVGKTTAQKVLKEAGISEDTRTRELTEEQLNQLRDGLDKVKVEGDLRREISLNIKRLIEIGCYRGVRHRRGLPVRGQNTKNNSRTRKGPRRTVANKKK.

The segment at 94–121 (GLPVRGQNTKNNSRTRKGPRRTVANKKK) is disordered. Basic residues predominate over residues 106-121 (SRTRKGPRRTVANKKK).

It belongs to the universal ribosomal protein uS13 family. As to quaternary structure, part of the 30S ribosomal subunit. Forms a loose heterodimer with protein S19. Forms two bridges to the 50S subunit in the 70S ribosome.

Located at the top of the head of the 30S subunit, it contacts several helices of the 16S rRNA. In the 70S ribosome it contacts the 23S rRNA (bridge B1a) and protein L5 of the 50S subunit (bridge B1b), connecting the 2 subunits; these bridges are implicated in subunit movement. Contacts the tRNAs in the A and P-sites. The protein is Small ribosomal subunit protein uS13 of Exiguobacterium sibiricum (strain DSM 17290 / CCUG 55495 / CIP 109462 / JCM 13490 / 255-15).